A 444-amino-acid polypeptide reads, in one-letter code: CCA-adding enzyme (444 aa).

ATP is bound by residues serine 57 and arginine 60. Serine 57 and arginine 60 together coordinate CTP. Mg(2+) contacts are provided by aspartate 69, aspartate 71, and aspartate 124. Histidine 147, lysine 168, and tyrosine 177 together coordinate ATP. Residues histidine 147, lysine 168, and tyrosine 177 each contribute to the CTP site.

The protein belongs to the tRNA nucleotidyltransferase/poly(A) polymerase family. Archaeal CCA-adding enzyme subfamily. In terms of assembly, homodimer. Mg(2+) is required as a cofactor.

The enzyme catalyses a tRNA precursor + 2 CTP + ATP = a tRNA with a 3' CCA end + 3 diphosphate. The catalysed reaction is a tRNA with a 3' CCA end + 2 CTP + ATP = a tRNA with a 3' CCACCA end + 3 diphosphate. In terms of biological role, catalyzes the addition and repair of the essential 3'-terminal CCA sequence in tRNAs without using a nucleic acid template. Adds these three nucleotides in the order of C, C, and A to the tRNA nucleotide-73, using CTP and ATP as substrates and producing inorganic pyrophosphate. tRNA 3'-terminal CCA addition is required both for tRNA processing and repair. Also involved in tRNA surveillance by mediating tandem CCA addition to generate a CCACCA at the 3' terminus of unstable tRNAs. While stable tRNAs receive only 3'-terminal CCA, unstable tRNAs are marked with CCACCA and rapidly degraded. In Methanococcus maripaludis (strain DSM 14266 / JCM 13030 / NBRC 101832 / S2 / LL), this protein is CCA-adding enzyme.